The chain runs to 163 residues: MKIPLIYNRILILFFFIANIIILDQVSKKWIINNLLLHEKKPLISIMNIFYVRNYGTAFNFFSNNPGEKNYILCLISSIAILIILKTMYNNTTIENFFYNIPSAFIISGAIGNFIDRCYLGYVIDFIDFHINNWHFATFNIADVSIFIGSVLFIYHNKYFLKN.

The next 3 membrane-spanning stretches (helical) occupy residues 3-23, 70-90, and 94-114; these read IPLIYNRILILFFFIANIIIL, NYILCLISSIAILIILKTMYN, and IENFFYNIPSAFIISGAIGNF. Catalysis depends on residues Asp-125 and Asp-143. The chain crosses the membrane as a helical span at residues 134-154; it reads WHFATFNIADVSIFIGSVLFI.

It belongs to the peptidase A8 family.

The protein localises to the cell membrane. The catalysed reaction is Release of signal peptides from bacterial membrane prolipoproteins. Hydrolyzes -Xaa-Yaa-Zaa-|-(S,diacylglyceryl)Cys-, in which Xaa is hydrophobic (preferably Leu), and Yaa (Ala or Ser) and Zaa (Gly or Ala) have small, neutral side chains.. It participates in protein modification; lipoprotein biosynthesis (signal peptide cleavage). Its function is as follows. This protein specifically catalyzes the removal of signal peptides from prolipoproteins. The protein is Lipoprotein signal peptidase of Buchnera aphidicola subsp. Baizongia pistaciae (strain Bp).